Here is a 1270-residue protein sequence, read N- to C-terminus: DNA-directed RNA polymerase subunit beta (1270 aa).

This sequence belongs to the RNA polymerase beta chain family. In terms of assembly, the RNAP catalytic core consists of 2 alpha, 1 beta, 1 beta' and 1 omega subunit. When a sigma factor is associated with the core the holoenzyme is formed, which can initiate transcription.

It carries out the reaction RNA(n) + a ribonucleoside 5'-triphosphate = RNA(n+1) + diphosphate. Its function is as follows. DNA-dependent RNA polymerase catalyzes the transcription of DNA into RNA using the four ribonucleoside triphosphates as substrates. The chain is DNA-directed RNA polymerase subunit beta from Bacteroides thetaiotaomicron (strain ATCC 29148 / DSM 2079 / JCM 5827 / CCUG 10774 / NCTC 10582 / VPI-5482 / E50).